The primary structure comprises 194 residues: Putative manganese efflux pump MntP (194 aa).

6 helical membrane passes run 2–22 (ISIIIQILLISVSVAMDAFAV), 43–63 (LWFGGFQMLFPILGYFAASTF), 67–87 (VTQFDHWIIFALLVFIGGNMV), 111–131 (PLAVACSIDAFAVGVSLAFMF), 137–157 (AFAILSIGVVTGLFSAAGLHI), and 174–194 (GVVLILLGIKVLLEHLGVIAF).

Belongs to the MntP (TC 9.B.29) family.

The protein resides in the cell membrane. Functionally, probably functions as a manganese efflux pump. The chain is Putative manganese efflux pump MntP from Bifidobacterium longum (strain DJO10A).